The sequence spans 302 residues: Methionyl-tRNA formyltransferase (302 aa).

Residue 108–111 (SILP) participates in (6S)-5,6,7,8-tetrahydrofolate binding.

Belongs to the Fmt family.

It catalyses the reaction L-methionyl-tRNA(fMet) + (6R)-10-formyltetrahydrofolate = N-formyl-L-methionyl-tRNA(fMet) + (6S)-5,6,7,8-tetrahydrofolate + H(+). Attaches a formyl group to the free amino group of methionyl-tRNA(fMet). The formyl group appears to play a dual role in the initiator identity of N-formylmethionyl-tRNA by promoting its recognition by IF2 and preventing the misappropriation of this tRNA by the elongation apparatus. This is Methionyl-tRNA formyltransferase from Sulfurimonas denitrificans (strain ATCC 33889 / DSM 1251) (Thiomicrospira denitrificans (strain ATCC 33889 / DSM 1251)).